The chain runs to 441 residues: Ribosomal protein uS12 methylthiotransferase RimO (441 aa).

In terms of domain architecture, MTTase N-terminal spans 8 to 118; the sequence is PKIGFVSLGC…VLQHVHHYVP (111 aa). [4Fe-4S] cluster-binding residues include cysteine 17, cysteine 53, cysteine 82, cysteine 150, cysteine 154, and cysteine 157. The Radical SAM core domain maps to 136-373; it reads LTPRHYAYLK…MQLQQQISAE (238 aa). The 66-residue stretch at 376 to 441 folds into the TRAM domain; the sequence is QEKVGREILV…DEYDLWGSRV (66 aa).

It belongs to the methylthiotransferase family. RimO subfamily. Requires [4Fe-4S] cluster as cofactor.

The protein resides in the cytoplasm. The enzyme catalyses L-aspartate(89)-[ribosomal protein uS12]-hydrogen + (sulfur carrier)-SH + AH2 + 2 S-adenosyl-L-methionine = 3-methylsulfanyl-L-aspartate(89)-[ribosomal protein uS12]-hydrogen + (sulfur carrier)-H + 5'-deoxyadenosine + L-methionine + A + S-adenosyl-L-homocysteine + 2 H(+). In terms of biological role, catalyzes the methylthiolation of an aspartic acid residue of ribosomal protein uS12. In Salmonella paratyphi B (strain ATCC BAA-1250 / SPB7), this protein is Ribosomal protein uS12 methylthiotransferase RimO.